The primary structure comprises 486 residues: CREB-regulated transcription coactivator 1 homolog (486 aa).

The tract at residues 1–62 is disordered; that stretch reads MSNSNTPRKF…APMPIPQQGL (62 aa). Positions 9–23 are enriched in basic and acidic residues; that stretch reads KFSEKIAILERKQNE. A compositionally biased stretch (polar residues) spans 34-52; it reads QVQSITHHPTDSSGSSTAT. A Phosphoserine; by AMPK modification is found at Ser-76. Residues 103–166 are disordered; that stretch reads PIQGHRSRSP…PPYNQPGQLV (64 aa). Residues 144 to 160 are compositionally biased toward pro residues; sequence RTPPQHPQYTPYGPPYN. Residue Ser-179 is modified to Phosphoserine; by AMPK. Disordered stretches follow at residues 214–278, 327–417, and 460–486; these read SMPG…QSPN, FNQD…SNSP, and APPQ…MLQN. Polar residues-rich tracts occupy residues 224–245, 387–402, and 461–475; these read PNSQ…QGSP, PESQ…QLDP, and PPQT…NNSF.

Belongs to the TORC family. In terms of assembly, interacts with crh-1. In terms of processing, phosphorylated by AMPK at Ser-76 and Ser-179. Dephosphorylated by tax-6, the catalytic subunit of calcineurin. In terms of tissue distribution, expressed throughout the intestine and in head and tail neurons. Expressed in octopaminergic RIC neurons.

The protein localises to the nucleus. The protein resides in the cytoplasm. It is found in the cytosol. Transcriptional coactivator for crh-1, the homolog of vertebrate transcription factor CREB1. Regulates the transcription of metabolic genes and may have a role in mitochondrial dynamics and metabolism. Involved in modulation of lifespan. Through crh-1, counteracts the pro-lifespan-extension signals of AMPK both cell autonomously and, when expressed in neurons, at a systemic level, possibly using the catecholamine analog, octopamine, as a messenger. The chain is CREB-regulated transcription coactivator 1 homolog from Caenorhabditis elegans.